The sequence spans 296 residues: 4-diphosphocytidyl-2-C-methyl-D-erythritol kinase (296 aa).

Residue Lys-12 is part of the active site. 94 to 104 (PAQAGMGGGSS) is a binding site for ATP. Residue Asp-136 is part of the active site.

Belongs to the GHMP kinase family. IspE subfamily.

The enzyme catalyses 4-CDP-2-C-methyl-D-erythritol + ATP = 4-CDP-2-C-methyl-D-erythritol 2-phosphate + ADP + H(+). Its pathway is isoprenoid biosynthesis; isopentenyl diphosphate biosynthesis via DXP pathway; isopentenyl diphosphate from 1-deoxy-D-xylulose 5-phosphate: step 3/6. Its function is as follows. Catalyzes the phosphorylation of the position 2 hydroxy group of 4-diphosphocytidyl-2C-methyl-D-erythritol. In Variovorax paradoxus (strain S110), this protein is 4-diphosphocytidyl-2-C-methyl-D-erythritol kinase.